A 648-amino-acid polypeptide reads, in one-letter code: MTDFDTKKLNKKWTIEDSISTYGIDKWGEKYFSINSEGNISISPDNKSQKKIDLFKLVKEFKSREINTPLIIRFNDILKDRIAELNNAFSQAIETYDYKNIYKGVFPIKCNQQRNVLEKIIEYGDRWNFGLEVGSKSELLIGLSILENQKSLLICNGYKDKKYIETAILARKLGKHPIIVIEQRDEVKRIIEAVKDLKATPILGIRSKLSSKSSGRWSKSVGDNSKFGLSIPEIMLTIKELKEANLINEMMLLHFHVGSQISDISVIKDALQEASQIFVELSKLGAPMKYIDVGGGLGIDFDGTKMSSNTSTNYSLQNYANDVIATVKDSCEVNNIQHPIIISESGRAIISHCSVLIFNILGTSHVSSQVKVSDQKKQSLIITNLIETLNQIKNLRDKKEDLSEIIELWNDAKKFKEDCLVAFRLGFICLEERAYAEELTWACAKEIANQLENNEIIHPDLSEITDTLASTYYANLSVFKSIPDTWAINQVFPIIPIHRHLEEPFCKGHFADLTCDSDGKLNNFIDNGKIKSLLNLHPPEKNNDYLIGIFMAGAYQEALGNFHNLFGNTNVIHIDINEDNSYKIKNIIKENSKSEILELLDYSSDNLVESIRVNTESAINNKTLTIQEARKLIDQIETSLRKSSYLSE.

Lysine 109 bears the N6-(pyridoxal phosphate)lysine mark. Substrate is bound at residue 291–301 (IDVGGGLGIDF).

The protein belongs to the Orn/Lys/Arg decarboxylase class-II family. SpeA subfamily. Requires Mg(2+) as cofactor. Pyridoxal 5'-phosphate is required as a cofactor.

It catalyses the reaction L-arginine + H(+) = agmatine + CO2. Catalyzes the biosynthesis of agmatine from arginine. The protein is Biosynthetic arginine decarboxylase of Prochlorococcus marinus subsp. pastoris (strain CCMP1986 / NIES-2087 / MED4).